The chain runs to 349 residues: N-acetyltaurine hydrolase (349 aa).

A divalent metal cation is bound by residues His-26, His-28, Glu-169, His-201, His-230, and Asp-298.

This sequence belongs to the metallo-dependent hydrolases superfamily. Phosphotriesterase family. A divalent metal cation is required as a cofactor.

The protein resides in the cytoplasm. It localises to the cytosol. It catalyses the reaction N-acetyltaurine + H2O = taurine + acetate. It carries out the reaction N-propanoyltaurine + H2O = propanoate + taurine. The catalysed reaction is N-acetyl-L-methionine + H2O = L-methionine + acetate. The enzyme catalyses N-acetyl-L-isoleucine + H2O = L-isoleucine + acetate. It catalyses the reaction N-acetyl-L-leucine + H2O = L-leucine + acetate. It carries out the reaction N-acetyl-L-valine + H2O = L-valine + acetate. N-acetyltaurine hydrolase that catalyzes the hydrolysis of N-acetyltaurine into taurine and acetate. PTER also acts on other N-acetyl amino acids (Met, Ile, Leu, Val) and N-propionyltaurine, but at lower rates. This is N-acetyltaurine hydrolase (pter) from Xenopus tropicalis (Western clawed frog).